Here is a 425-residue protein sequence, read N- to C-terminus: Enolase (425 aa).

(2R)-2-phosphoglycerate is bound at residue glutamine 163. Glutamate 205 serves as the catalytic Proton donor. The Mg(2+) site is built by aspartate 242, glutamate 285, and aspartate 312. (2R)-2-phosphoglycerate-binding residues include lysine 337, arginine 366, serine 367, and lysine 388. The Proton acceptor role is filled by lysine 337.

It belongs to the enolase family. It depends on Mg(2+) as a cofactor.

The protein localises to the cytoplasm. The protein resides in the secreted. It localises to the cell surface. It carries out the reaction (2R)-2-phosphoglycerate = phosphoenolpyruvate + H2O. The protein operates within carbohydrate degradation; glycolysis; pyruvate from D-glyceraldehyde 3-phosphate: step 4/5. In terms of biological role, catalyzes the reversible conversion of 2-phosphoglycerate (2-PG) into phosphoenolpyruvate (PEP). It is essential for the degradation of carbohydrates via glycolysis. The polypeptide is Enolase (Ruegeria sp. (strain TM1040) (Silicibacter sp.)).